Consider the following 267-residue polypeptide: Sulfur carrier protein FdhD (267 aa).

Catalysis depends on Cys108, which acts as the Cysteine persulfide intermediate.

This sequence belongs to the FdhD family.

The protein resides in the cytoplasm. In terms of biological role, required for formate dehydrogenase (FDH) activity. Acts as a sulfur carrier protein that transfers sulfur from IscS to the molybdenum cofactor prior to its insertion into FDH. In Shouchella clausii (strain KSM-K16) (Alkalihalobacillus clausii), this protein is Sulfur carrier protein FdhD.